Reading from the N-terminus, the 331-residue chain is Lipoyl synthase (331 aa).

Residues 1 to 14 (MSTQLDASQPSNDV) are compositionally biased toward polar residues. Residues 1–32 (MSTQLDASQPSNDVASPAAYDPTQKQKSQAKT) are disordered. [4Fe-4S] cluster-binding residues include cysteine 78, cysteine 83, cysteine 89, cysteine 104, cysteine 108, cysteine 111, and serine 318. In terms of domain architecture, Radical SAM core spans 89–307 (CFGKGTATFM…EREAYAMGFS (219 aa)).

This sequence belongs to the radical SAM superfamily. Lipoyl synthase family. It depends on [4Fe-4S] cluster as a cofactor.

It is found in the cytoplasm. The catalysed reaction is [[Fe-S] cluster scaffold protein carrying a second [4Fe-4S](2+) cluster] + N(6)-octanoyl-L-lysyl-[protein] + 2 oxidized [2Fe-2S]-[ferredoxin] + 2 S-adenosyl-L-methionine + 4 H(+) = [[Fe-S] cluster scaffold protein] + N(6)-[(R)-dihydrolipoyl]-L-lysyl-[protein] + 4 Fe(3+) + 2 hydrogen sulfide + 2 5'-deoxyadenosine + 2 L-methionine + 2 reduced [2Fe-2S]-[ferredoxin]. It participates in protein modification; protein lipoylation via endogenous pathway; protein N(6)-(lipoyl)lysine from octanoyl-[acyl-carrier-protein]: step 2/2. Its function is as follows. Catalyzes the radical-mediated insertion of two sulfur atoms into the C-6 and C-8 positions of the octanoyl moiety bound to the lipoyl domains of lipoate-dependent enzymes, thereby converting the octanoylated domains into lipoylated derivatives. This chain is Lipoyl synthase, found in Bordetella avium (strain 197N).